The following is a 217-amino-acid chain: Cytidylate kinase (217 aa).

10 to 18 (GPAGAGKST) is a binding site for ATP.

This sequence belongs to the cytidylate kinase family. Type 1 subfamily.

The protein resides in the cytoplasm. It catalyses the reaction CMP + ATP = CDP + ADP. It carries out the reaction dCMP + ATP = dCDP + ADP. This chain is Cytidylate kinase, found in Clostridium botulinum (strain ATCC 19397 / Type A).